The following is a 338-amino-acid chain: Methionine import ATP-binding protein MetN 1 (338 aa).

The ABC transporter domain occupies 2-241; sequence IELHQVSKSF…AKHATTKRFV (240 aa). 38–45 is a binding site for ATP; it reads GYSGAGKS.

It belongs to the ABC transporter superfamily. Methionine importer (TC 3.A.1.24) family. The complex is composed of two ATP-binding proteins (MetN), two transmembrane proteins (MetI) and a solute-binding protein (MetQ).

It is found in the cell membrane. It catalyses the reaction L-methionine(out) + ATP + H2O = L-methionine(in) + ADP + phosphate + H(+). It carries out the reaction D-methionine(out) + ATP + H2O = D-methionine(in) + ADP + phosphate + H(+). Functionally, part of the ABC transporter complex MetNIQ involved in methionine import. Responsible for energy coupling to the transport system. This chain is Methionine import ATP-binding protein MetN 1, found in Listeria innocua serovar 6a (strain ATCC BAA-680 / CLIP 11262).